A 198-amino-acid polypeptide reads, in one-letter code: Peroxiredoxin-2 (198 aa).

At alanine 2 the chain carries N-acetylalanine. Residues 6 to 164 (ARIGKPAPDF…ALRLVQAFQY (159 aa)) enclose the Thioredoxin domain. The active-site Cysteine sulfenic acid (-SOH) intermediate is cysteine 51. Serine 112 is modified (phosphoserine). Position 182 is a phosphothreonine (threonine 182). Lysine 196 is modified (N6-acetyllysine).

The protein belongs to the peroxiredoxin family. AhpC/Prx1 subfamily. Homodimer; disulfide-linked, upon oxidation. 5 homodimers assemble to form a ring-like decamer. Interacts with TIPIN. In terms of processing, the enzyme can be inactivated by further oxidation of the cysteine sulfenic acid (C(P)-SOH) to sulphinic acid (C(P)-SO2H) instead of its condensation to a disulfide bond. It can be reactivated by forming a transient disulfide bond with sulfiredoxin SRXN1, which reduces the cysteine sulfinic acid in an ATP- and Mg-dependent manner. Post-translationally, acetylation increases resistance to transition to high molecular-mass complexes. Deacetylated by HDAC6 which decreases reducing activity.

Its subcellular location is the cytoplasm. It catalyses the reaction a hydroperoxide + [thioredoxin]-dithiol = an alcohol + [thioredoxin]-disulfide + H2O. In terms of biological role, thiol-specific peroxidase that catalyzes the reduction of hydrogen peroxide and organic hydroperoxides to water and alcohols, respectively. Plays a role in cell protection against oxidative stress by detoxifying peroxides and as sensor of hydrogen peroxide-mediated signaling events. Might participate in the signaling cascades of growth factors and tumor necrosis factor-alpha by regulating the intracellular concentrations of H(2)O(2). The polypeptide is Peroxiredoxin-2 (PRDX2) (Macaca fascicularis (Crab-eating macaque)).